Reading from the N-terminus, the 164-residue chain is Large ribosomal subunit protein uL10 (164 aa).

The protein belongs to the universal ribosomal protein uL10 family. Part of the ribosomal stalk of the 50S ribosomal subunit. The N-terminus interacts with L11 and the large rRNA to form the base of the stalk. The C-terminus forms an elongated spine to which L12 dimers bind in a sequential fashion forming a multimeric L10(L12)X complex.

In terms of biological role, forms part of the ribosomal stalk, playing a central role in the interaction of the ribosome with GTP-bound translation factors. This is Large ribosomal subunit protein uL10 from Helicobacter pylori (strain P12).